An 803-amino-acid polypeptide reads, in one-letter code: MADMSVKQLADLVRTTPERLLEQLKEAGVAITHVDQTISDEEKRKLLLHLKTSHSTETDKKRSKIVLKRKKLSVVKSGKKSVNVEIRSKRTYTKPVVEQKRETEPAPTQEVPPTSDTTNLNEKAEVNVATLEKAVEAEVKEEAKKTPSEKKETPKKGPRKETRRSRKPDKEDKWEREELHMTKLVEERRRRHKPAHMPDSDSASAKLEQGFARPTAPVVREVALPESITVADLAQKMSVKAAEVIKAMMKLGAMVTINQRIDQETAAIVVEEMGHKPKLIKEDVLEENLVATLGEQTGEAVPRAPVVTIMGHVDHGKTSLLDYIRRTKVTSTEAGGITQHIGAYHVETELGMITFLDTPGHEAFTAMRARGAKCTDIVVLVVAADDGVMPQTVEAIQHARAAKVPVVVAVNKIDKPEADPERIKTELSTHDVLPEEWGGDTMFQPISAKTGEGIDALLERILLQAEVLELKAVDNGPARGMVVESRLDRGRGPVATVLVTSGELHLGDILLVGREYGRVRAMIGDDGRPCESAGPSMPVEVLGLSGTSVAGEEAIVVPDERKAREIARFRQGKYREVRLAKKQTAHLERIFDRMGEGKQNTLNIVLKADVQGSLEALTEALNKLSTDEVKVNIIASGVGGITESDVNLAIASDAVVIGFNVRADAPTRVLVEREGVDLRYYSIIYDLIDEVKKALSGLLAPEFEEKIVGLAEVRDVFRSSKIGAIAGCMVVEGVVRRHLPIRVLRDNVVIYEGQLESLRRYKEDVAEVRQGTECGIGVKNYNDVKVGDQIEVYEKTQVHRTIA.

2 disordered regions span residues 93 to 123 and 138 to 206; these read TKPV…LNEK and EVKE…ASAK. The segment covering 111–121 has biased composition (polar residues); that stretch reads VPPTSDTTNLN. A compositionally biased stretch (basic and acidic residues) spans 138–155; sequence EVKEEAKKTPSEKKETPK. Positions 156–167 are enriched in basic residues; it reads KGPRKETRRSRK. The segment covering 168 to 188 has biased composition (basic and acidic residues); that stretch reads PDKEDKWEREELHMTKLVEER. Residues 302–471 enclose the tr-type G domain; sequence PRAPVVTIMG…LLQAEVLELK (170 aa). Positions 311–318 are G1; it reads GHVDHGKT. Residue 311 to 318 coordinates GTP; it reads GHVDHGKT. The segment at 336–340 is G2; the sequence is GITQH. The tract at residues 357–360 is G3; sequence DTPG. Residues 357–361 and 411–414 contribute to the GTP site; these read DTPGH and NKID. The G4 stretch occupies residues 411–414; it reads NKID. The interval 447-449 is G5; the sequence is SAK.

It belongs to the TRAFAC class translation factor GTPase superfamily. Classic translation factor GTPase family. IF-2 subfamily.

It is found in the cytoplasm. Functionally, one of the essential components for the initiation of protein synthesis. Protects formylmethionyl-tRNA from spontaneous hydrolysis and promotes its binding to the 30S ribosomal subunits. Also involved in the hydrolysis of GTP during the formation of the 70S ribosomal complex. In Coxiella burnetii (strain RSA 493 / Nine Mile phase I), this protein is Translation initiation factor IF-2.